Reading from the N-terminus, the 1564-residue chain is MGDYLLSWSWILDAFETSDENLSQNKFEELLDARIAAFQQIESPVTGTLNSNKTTEGEEAKLSIYDSSHSISKSQLESVKKISDITGYNEAQVAYVLLVHQYELNTQYFSQLDNDSVLAQEFQRRYYAEIISCWKVLAFLLQACTDADSKWHKMATRLIVSIFQTAQRSGENAQSTTPSIFCVRIIDYLSKMTSQAAPASLTFNGEEAISQWYFFHFNLQLQLLRVIFLSTYSLVVCNSEMAISWFNCMKKTRYLHDQEFMHLDIDTGFSMCKEITNVAIIISINFISLEKQVLSFKDNPSFFMLSGNTIISLHDMITQLSNDSIGAAVSLTWGIALHLLSNSPDNIPLIQNSSVVSSKILQNPQNSFQALIIAALKYDPFTLIHRIISSLEDDPYIDGYSKIMATLFSSAVSYVKFSDSTMLCATTLFKTPQVYQLFENNDSVTRLLNFARARFPFEYSQFVLLLIPTFACLTSKQLVSSELLHMTTFTQSLPSGFKAYEIIPEPNVTGNALIELQESLHLDSYGFFFPNAERSLPKGTRGRIVSVDTYPPVVMWDLNYSLWEAVGISLNYIVRNGLINSHKSFVLTVLSSSVPLFQTDVSGACELVHLASEGLDGELDFINVICDLLDYFLSLSVIEDADYQICVSSLRLLREFTRFAATDVWAYVTRSLVCVGSEKGISLEDVIFDYESINGVYDFTLAFFDLYEILLDNCISTSVVPDDFSIRLKTDFVKRAMRFLCEVFANYLDWKYARIIQQYQIGHRFASLITKLLNVTFGIEYFNPKTTVNKKTLPLRELSHYIVQRFLVQQDSNRYLHPLLSVMDLINLLYTDIFSTISSPRAKAAKMWLISSFCAMKTLICLRGFLNLKPSELERELFSRSPDLFNCLPRLLCCIAPILQLLSALILAPWPSETPSLLAYMINSTDIVGRVCIQILTNPIQSTNIEGSVWKFLSSIMKGQQQGLAVLLFSGKKFPLDRMKSLNHNVDVQLTSKSLISLAEKRLDSFSINDILSQVPVFEFIFLSRNFWTASLGNLQQEANFWNRIVDAIKLPLTVKLDGLSSVAQADLYILAAHATRITAIQLHMSKLNKSNSSKKIIIDPLKDSMKDLVQHAFTITAYDSNIHNALTRAFKHENGDLHISDLRNTGLFPLRYGDNYFYNIKLAKNMLLNTEDTSFKISMMMSANENLSLLDAQAALLRSWSIFICAFVEFVKEDATLSILELKIMKWVLKSLAEDTIDVNVVQELSAERAALVFRISQQTLAIPISNEVKEHLQSILLLTWKAITTTKFSIYEDSNGEMAYYRPLLHVLYNTLNRLLSEEKENLSLSVGFVSGLLQLCHRKLSQLFEKAVINPTIEVYGDIVLLNSLHKCIVNSHLIRGLQSLYISYINDSFSVDNCLRLFSWSHSLLVDGQPYFADAALSFLLICSSSPAGAEQIVMNGFFYSIMESPLSTALSTGGLGLDGSSIQYKIWIRGILPLLFNIVKFLGNRIMNDMREFVLLAFPQIQYALLNWCQPPSSISLASIDESFMIVLLFDLLQQFNPALLQEIRLAELKIEMLEASTI.

The protein resides in the nucleus. The protein localises to the nuclear pore complex. In terms of biological role, interacts with pom152 in the core structure of the nuclear pore complex (NPC). Involved in the export of mRNA. The sequence is that of Nucleoporin nup184 (nup184) from Schizosaccharomyces pombe (strain 972 / ATCC 24843) (Fission yeast).